We begin with the raw amino-acid sequence, 388 residues long: MKYLTSGESHGPQLTVIIEGVPANLEIKAEDINKEMFKRQGGYGRGRRMQIEKDAVEIVSGVRNGYTLGSPITIVVTNDDFTHWRNIMGIEPISDEERDNMKRTITKPRPGHADLIGGMKYNHRDLRNVLERSSARETAARVAVGAVSKILLEQLDIHMYSRVVEIGGIKDEGLYDTETFKQNIDKNDVRVIDETIAQKMRDKIDAAKKDGDSIGGVVQVMVENMPVAVGSYVQYDRKLDGRIAQGVVSINAFKGVSFGEGFKAAEKPGSEIQDEILYDNEIGFYRGSNHLGGFEGGMTNGMPIIVNGVMKPIPTLYKPLNSVDINTKEDFKATIERSDSCAVPAASVVCEHVVAFEVAKAITEEFQSNHIDQLKAQIDERRRLNIEF.

NADP(+) is bound by residues arginine 39 and arginine 45. FMN-binding positions include 132–134 (RSS), 251–252 (NA), glycine 296, 311–315 (KPIPT), and arginine 337.

Belongs to the chorismate synthase family. In terms of assembly, homotetramer. FMNH2 is required as a cofactor.

It catalyses the reaction 5-O-(1-carboxyvinyl)-3-phosphoshikimate = chorismate + phosphate. Its pathway is metabolic intermediate biosynthesis; chorismate biosynthesis; chorismate from D-erythrose 4-phosphate and phosphoenolpyruvate: step 7/7. In terms of biological role, catalyzes the anti-1,4-elimination of the C-3 phosphate and the C-6 proR hydrogen from 5-enolpyruvylshikimate-3-phosphate (EPSP) to yield chorismate, which is the branch point compound that serves as the starting substrate for the three terminal pathways of aromatic amino acid biosynthesis. This reaction introduces a second double bond into the aromatic ring system. This chain is Chorismate synthase, found in Staphylococcus haemolyticus (strain JCSC1435).